Consider the following 297-residue polypeptide: Small ribosomal subunit protein uS2 (297 aa).

Positions 276–297 (DWASSAPAEGWAGEAPATEAKW) are disordered.

The protein belongs to the universal ribosomal protein uS2 family. As to quaternary structure, component of the small ribosomal subunit. Mature ribosomes consist of a small (40S) and a large (60S) subunit. The 40S subunit contains about 33 different proteins and 1 molecule of RNA (18S). The 60S subunit contains about 49 different proteins and 3 molecules of RNA (25S, 5.8S and 5S). Interacts with RPS21.

Its subcellular location is the cytoplasm. Required for the assembly and/or stability of the 40S ribosomal subunit. Required for the processing of the 20S rRNA-precursor to mature 18S rRNA in a late step of the maturation of 40S ribosomal subunits. The sequence is that of Small ribosomal subunit protein uS2 from Uncinocarpus reesii (strain UAMH 1704).